We begin with the raw amino-acid sequence, 125 residues long: Large ribosomal subunit protein bL12 (125 aa).

Belongs to the bacterial ribosomal protein bL12 family. In terms of assembly, homodimer. Part of the ribosomal stalk of the 50S ribosomal subunit. Forms a multimeric L10(L12)X complex, where L10 forms an elongated spine to which 2 to 4 L12 dimers bind in a sequential fashion. Binds GTP-bound translation factors.

Forms part of the ribosomal stalk which helps the ribosome interact with GTP-bound translation factors. Is thus essential for accurate translation. The chain is Large ribosomal subunit protein bL12 from Campylobacter jejuni subsp. jejuni serotype O:6 (strain 81116 / NCTC 11828).